The chain runs to 51 residues: UPF0320 protein YOL166W-A (51 aa).

Belongs to the UPF0320 family.

This Saccharomyces cerevisiae (strain ATCC 204508 / S288c) (Baker's yeast) protein is UPF0320 protein YOL166W-A.